The following is a 449-amino-acid chain: tRNA (guanine(37)-N(1))-methyltransferase (449 aa).

Residues histidine 216, 254 to 255 (DL), 282 to 283 (DG), and asparagine 345 each bind S-adenosyl-L-methionine.

This sequence belongs to the class I-like SAM-binding methyltransferase superfamily. TRM5/TYW2 family. As to quaternary structure, monomer.

It is found in the mitochondrion matrix. Its subcellular location is the nucleus. The protein resides in the cytoplasm. It catalyses the reaction guanosine(37) in tRNA + S-adenosyl-L-methionine = N(1)-methylguanosine(37) in tRNA + S-adenosyl-L-homocysteine + H(+). In terms of biological role, specifically methylates the N1 position of guanosine-37 in various cytoplasmic and mitochondrial tRNAs. Methylation is not dependent on the nature of the nucleoside 5' of the target nucleoside. This is the first step in the biosynthesis of wybutosine (yW), a modified base adjacent to the anticodon of tRNAs and required for accurate decoding. The polypeptide is tRNA (guanine(37)-N(1))-methyltransferase (Candida albicans (strain SC5314 / ATCC MYA-2876) (Yeast)).